A 247-amino-acid polypeptide reads, in one-letter code: Adenosylcobinamide-GDP ribazoletransferase (247 aa).

Helical transmembrane passes span 31–51, 57–77, 109–129, 136–156, 189–209, and 218–238; these read VVWF…AAAL, PWLG…GLHL, FGVI…HWLL, PALV…TLLL, ITPI…WMWL, and ILGA…GVSL.

Belongs to the CobS family. Mg(2+) is required as a cofactor.

It localises to the cell inner membrane. It catalyses the reaction alpha-ribazole + adenosylcob(III)inamide-GDP = adenosylcob(III)alamin + GMP + H(+). The enzyme catalyses alpha-ribazole 5'-phosphate + adenosylcob(III)inamide-GDP = adenosylcob(III)alamin 5'-phosphate + GMP + H(+). Its pathway is cofactor biosynthesis; adenosylcobalamin biosynthesis; adenosylcobalamin from cob(II)yrinate a,c-diamide: step 7/7. Functionally, joins adenosylcobinamide-GDP and alpha-ribazole to generate adenosylcobalamin (Ado-cobalamin). Also synthesizes adenosylcobalamin 5'-phosphate from adenosylcobinamide-GDP and alpha-ribazole 5'-phosphate. This chain is Adenosylcobinamide-GDP ribazoletransferase, found in Thiobacillus denitrificans (strain ATCC 25259 / T1).